The sequence spans 793 residues: Lon protease 1 (793 aa).

The Lon N-terminal domain occupies 8 to 202 (VPVIPLKNSV…KLLDRLQELK (195 aa)). 354-361 (GPPGVGKT) is an ATP binding site. Residues 590-770 (LLPPGVVTGL…NEVLKITLGV (181 aa)) form the Lon proteolytic domain. Active-site residues include S676 and K719.

The protein belongs to the peptidase S16 family. As to quaternary structure, homohexamer. Organized in a ring with a central cavity.

The protein resides in the cytoplasm. The catalysed reaction is Hydrolysis of proteins in presence of ATP.. ATP-dependent serine protease that mediates the selective degradation of mutant and abnormal proteins as well as certain short-lived regulatory proteins. Required for cellular homeostasis and for survival from DNA damage and developmental changes induced by stress. Degrades polypeptides processively to yield small peptide fragments that are 5 to 10 amino acids long. Binds to DNA in a double-stranded, site-specific manner. In Bdellovibrio bacteriovorus (strain ATCC 15356 / DSM 50701 / NCIMB 9529 / HD100), this protein is Lon protease 1.